The sequence spans 165 residues: Large ribosomal subunit protein uL10 (165 aa).

It belongs to the universal ribosomal protein uL10 family. Part of the ribosomal stalk of the 50S ribosomal subunit. The N-terminus interacts with L11 and the large rRNA to form the base of the stalk. The C-terminus forms an elongated spine to which L12 dimers bind in a sequential fashion forming a multimeric L10(L12)X complex.

Forms part of the ribosomal stalk, playing a central role in the interaction of the ribosome with GTP-bound translation factors. The polypeptide is Large ribosomal subunit protein uL10 (Burkholderia multivorans (strain ATCC 17616 / 249)).